The primary structure comprises 478 residues: Ankyrin repeat and BTB/POZ domain-containing protein 1 (478 aa).

2 ANK repeats span residues 1–31 and 35–64; these read MDTSDLFASCRKGDVGRVRYLLEQRDVEVNV and WDSTPLYYACLCGHEELVLYLLANGARCEA. BTB domains are found at residues 115-182 and 272-346; these read SDVV…DIGV and PDIC…ELSP. Residues 451-477 adopt a coiled-coil conformation; sequence VQTYSAIEEAQQRLRALEDLLVSIGLD.

In terms of tissue distribution, ubiquitously expressed in all fetal tissues examined including heart, brain, liver, and kidney. Also expressed at lower levels in both adult heart and hypertrophic heart.

The protein localises to the cytoplasm. May act as a mediator of the PTEN growth-suppressive signaling pathway. May play a role in developmental processes. This chain is Ankyrin repeat and BTB/POZ domain-containing protein 1, found in Homo sapiens (Human).